Reading from the N-terminus, the 76-residue chain is ATP synthase subunit c (76 aa).

Helical transmembrane passes span 13–33 (LNVV…GILI) and 55–75 (FLGL…AFIF).

The protein belongs to the ATPase C chain family. In terms of assembly, F-type ATPases have 2 components, F(1) - the catalytic core - and F(0) - the membrane proton channel. F(1) has five subunits: alpha(3), beta(3), gamma(1), delta(1), epsilon(1). F(0) has three main subunits: a(1), b(2) and c(10-14). The alpha and beta chains form an alternating ring which encloses part of the gamma chain. F(1) is attached to F(0) by a central stalk formed by the gamma and epsilon chains, while a peripheral stalk is formed by the delta and b chains.

Its subcellular location is the cell membrane. Its function is as follows. F(1)F(0) ATP synthase produces ATP from ADP in the presence of a proton or sodium gradient. F-type ATPases consist of two structural domains, F(1) containing the extramembraneous catalytic core and F(0) containing the membrane proton channel, linked together by a central stalk and a peripheral stalk. During catalysis, ATP synthesis in the catalytic domain of F(1) is coupled via a rotary mechanism of the central stalk subunits to proton translocation. Functionally, key component of the F(0) channel; it plays a direct role in translocation across the membrane. A homomeric c-ring of between 10-14 subunits forms the central stalk rotor element with the F(1) delta and epsilon subunits. This chain is ATP synthase subunit c, found in Bifidobacterium animalis subsp. lactis (strain AD011).